The primary structure comprises 435 residues: Trigger factor (435 aa).

One can recognise a PPIase FKBP-type domain in the interval 162–247; it reads GDRINIDYRG…LSGVESSKLP (86 aa).

The protein belongs to the FKBP-type PPIase family. Tig subfamily.

The protein resides in the cytoplasm. It carries out the reaction [protein]-peptidylproline (omega=180) = [protein]-peptidylproline (omega=0). Involved in protein export. Acts as a chaperone by maintaining the newly synthesized protein in an open conformation. Functions as a peptidyl-prolyl cis-trans isomerase. The chain is Trigger factor from Nitrosospira multiformis (strain ATCC 25196 / NCIMB 11849 / C 71).